A 395-amino-acid polypeptide reads, in one-letter code: MKKIEGGICAVKGVTANGIKLGKMGITVIRAEGPAAGVFTKNKVTAAPVVLSKGVIETQHQLSAIIANSGNANAFTGDDGFLDAMEMASALSESLDLEPDTVAVASTGVIGRRLDVSWIREHLPEVLEGLGSSPECSLAAAKAIMTTDKALKEVAVELDCGVRIGAIAKGSGMIEPNMGTMLCFAYTDALVPADVLDAALRIAVDKTFNMVVVDGDTSTNDMVLFTSTCKSGIKPCMECLDEFEDALIYLFTDLAKKMARDGEGATKLIEARVTGAKTYEDARLAVKAIVRSPLVKSAIFGKDPNWGRVVAAAGYSGAELEQERLSLSFSAGGETVELVKSGEISRVSDLALLNKIMANEEIIITLDFGMGKESATAWGCDLTYDYVRINAEYTT.

Substrate contacts are provided by T146, K169, T180, E263, N390, and T395. T180 functions as the Nucleophile in the catalytic mechanism.

Belongs to the ArgJ family. As to quaternary structure, heterotetramer of two alpha and two beta chains.

Its subcellular location is the cytoplasm. It carries out the reaction N(2)-acetyl-L-ornithine + L-glutamate = N-acetyl-L-glutamate + L-ornithine. The protein operates within amino-acid biosynthesis; L-arginine biosynthesis; L-ornithine and N-acetyl-L-glutamate from L-glutamate and N(2)-acetyl-L-ornithine (cyclic): step 1/1. Its function is as follows. Catalyzes the transfer of the acetyl group from N(2)-acetylornithine to glutamate, forming N-acetylglutamate and L-ornithine. The protein is Glutamate N-acetyltransferase of Methanosarcina acetivorans (strain ATCC 35395 / DSM 2834 / JCM 12185 / C2A).